A 573-amino-acid chain; its full sequence is Putative cytochrome c oxidase subunit 1-beta (573 aa).

A helical transmembrane segment spans residues 53 to 73 (VIGHLYLATSFGFFLLGGVLA). Position 100 (histidine 100) interacts with Fe(II)-heme a. The next 6 membrane-spanning stretches (helical) occupy residues 103–123 (IMML…IMPL), 141–161 (WMYL…GGAA), 188–208 (GLVV…STII), 227–247 (ILFT…ALLM), 272–292 (LFWF…FGIV), and 304–324 (IFGY…SAVV). Residues histidine 278 and tyrosine 282 each coordinate Cu cation. The 1'-histidyl-3'-tyrosine (His-Tyr) cross-link spans 278-282 (HPEVY). Cu cation is bound by residues histidine 327 and histidine 328. 2 helical membrane passes run 329–349 (MFAT…LIAV) and 373–393 (MLWA…GVLI). Residue histidine 411 participates in heme a3 binding. 3 consecutive transmembrane segments (helical) span residues 412 to 432 (LHYV…YFWW), 447 to 467 (IHFW…HWLG), and 490 to 510 (ISSI…YNVW). Position 413 (histidine 413) interacts with Fe(II)-heme a.

Belongs to the heme-copper respiratory oxidase family. Associates with subunits II, III and IV to form cytochrome c oxidase. Requires Cu(2+) as cofactor. Heme is required as a cofactor.

Its subcellular location is the cell membrane. It carries out the reaction 4 Fe(II)-[cytochrome c] + O2 + 8 H(+)(in) = 4 Fe(III)-[cytochrome c] + 2 H2O + 4 H(+)(out). Its pathway is energy metabolism; oxidative phosphorylation. In terms of biological role, cytochrome c oxidase is the component of the respiratory chain that catalyzes the reduction of oxygen to water. Subunits 1-3 form the functional core of the enzyme complex. CO I is the catalytic subunit of the enzyme. Electrons originating in cytochrome c are transferred via the copper A center of subunit 2 and heme A of subunit 1 to the bimetallic center formed by heme A3 and copper B. This chain is Putative cytochrome c oxidase subunit 1-beta (ctaD2), found in Streptomyces coelicolor (strain ATCC BAA-471 / A3(2) / M145).